Reading from the N-terminus, the 1431-residue chain is 1-phosphatidylinositol 4,5-bisphosphate phosphodiesterase beta egl-8 (1431 aa).

Positions 340–491 (MDMDQPLCHY…LRKKILIKNK (152 aa)) constitute a PI-PLC X-box domain. Residue histidine 355 is part of the active site. 3 residues coordinate Ca(2+): asparagine 356, glutamate 385, and aspartate 387. Residue histidine 403 is part of the active site. Residue glutamate 437 coordinates Ca(2+). Positions 489 and 491 each coordinate substrate. Disordered regions lie at residues 510-601 (KLDE…MVPD) and 632-692 (RRQS…SGPS). Residues 543 to 556 (EEVDDDTSDDDDDP) are compositionally biased toward acidic residues. 3 stretches are compositionally biased toward low complexity: residues 572–586 (NTTS…ARSS), 652–661 (SSSSPATPSI), and 668–692 (ATSS…SGPS). A PI-PLC Y-box domain is found at 758 to 874 (LSSLVNYTHP…GYLLKPDFLR (117 aa)). Substrate is bound by residues serine 787 and arginine 814. Residues 877 to 1002 (DRTFDPFSES…SLRSDTNQSF (126 aa)) enclose the C2 domain. Disordered regions lie at residues 1072–1119 (QPPR…VAVD), 1150–1176 (DLRK…SSIA), and 1188–1216 (NNRR…SASG). Over residues 1074 to 1113 (PRQNGSSADLLANNGQTGSARGDQTSSMASSTIRSPNEQP) the composition is skewed to polar residues. The stretch at 1135-1166 (KAFAKLLKRFQKELDDLRKKHQKQRDSIQKQQ) forms a coiled coil. Positions 1150–1162 (DLRKKHQKQRDSI) are enriched in basic and acidic residues. The span at 1191-1200 (RSTKKEKGSR) shows a compositional bias: basic residues. The span at 1204-1216 (TASVSSGCGSASG) shows a compositional bias: low complexity. Coiled-coil stretches lie at residues 1288 to 1318 (DEEE…KNQM) and 1368 to 1402 (EKNL…QLEQ).

It depends on Ca(2+) as a cofactor. As to expression, expressed in most or all neurons with high expression in the head and tail ganglia and low expression in the motor neurons of the ventral cord. Expressed in the intestine (at protein level). In males, expressed in vas deferens, spicule protractor muscles, diagonal muscles and a male-specific neuron.

It localises to the perikaryon. Its subcellular location is the cell projection. It is found in the axon. The protein localises to the synapse. The protein resides in the cell junction. It localises to the adherens junction. It carries out the reaction a 1,2-diacyl-sn-glycero-3-phospho-(1D-myo-inositol-4,5-bisphosphate) + H2O = 1D-myo-inositol 1,4,5-trisphosphate + a 1,2-diacyl-sn-glycerol + H(+). Functionally, mediates the production of the second messenger molecules diacylglycerol (DAG) and inositol 1,4,5-trisphosphate (IP3) which plays an important role in the regulation of intracellular signaling cascades. Required in the nervous system to modulate neuronal activity. Facilitates synaptic transmission at neuromuscular junctions by regulating the release of acetylcholine from the motor neurons and thus affecting locomotion. Plays a role in efficient egg laying and defecation. Involved in axon regeneration after injury. Plays a role in male mating behavior by regulating spicule insertion and sperm transfer. By triggering Ca(2+) transient via IP3-mediated activation of IPR3 receptor itr-1 in ASH sensory neurons, regulates avoidance behavior in response to nose touch. By activating tpa-1 via DAG production, required for the expression of antimicrobial peptide nlp-29 in response to fungal infection. During embryogenesis, may play a role in epidermal morphogenesis together with plc-1. The chain is 1-phosphatidylinositol 4,5-bisphosphate phosphodiesterase beta egl-8 from Caenorhabditis elegans.